The primary structure comprises 155 residues: Protein-export protein SecB (155 aa).

It belongs to the SecB family. As to quaternary structure, homotetramer, a dimer of dimers. One homotetramer interacts with 1 SecA dimer.

The protein localises to the cytoplasm. In terms of biological role, one of the proteins required for the normal export of preproteins out of the cell cytoplasm. It is a molecular chaperone that binds to a subset of precursor proteins, maintaining them in a translocation-competent state. It also specifically binds to its receptor SecA. This chain is Protein-export protein SecB, found in Salmonella heidelberg (strain SL476).